A 181-amino-acid polypeptide reads, in one-letter code: uncharacterized protein (181 aa).

A disordered region spans residues 162–181 (QARGPAGTRTPQRRCSSHEA).

This is an uncharacterized protein from Homo sapiens (Human).